The primary structure comprises 62 residues: Synergistic-type venom protein C8S2, chain 2 (62 aa).

3 cysteine pairs are disulfide-bonded: Cys3–Cys24, Cys17–Cys42, and Cys46–Cys57.

This sequence belongs to the three-finger toxin family. Short-chain subfamily. Aminergic toxin sub-subfamily. As to quaternary structure, heterodimer of C8S2 chain 1 (AC P01410) and chain 2; disulfide-linked. In terms of tissue distribution, expressed by the venom gland.

It is found in the secreted. This protein shows a synergetic toxic effect in that it enhances the toxicity of other toxins. The protein is Synergistic-type venom protein C8S2, chain 2 of Dendroaspis angusticeps (Eastern green mamba).